Here is a 1162-residue protein sequence, read N- to C-terminus: Nucleoporin nup132 (1162 aa).

It belongs to the nucleoporin Nup133 family. As to quaternary structure, component of the npc107-120 complex which consists of nup85, nup107, nup120, nup131, nup132 and seh1. Interacts with nup107.

The protein resides in the nucleus envelope. Functionally, functions as a component of the nuclear pore complex (NPC). NPC components, collectively referred to as nucleoporins (NUPs), can play the role of both NPC structural components and of docking or interaction partners for transiently associated nuclear transport factors. Active directional transport is assured by both, a Phe-Gly (FG) repeat affinity gradient for these transport factors across the NPC and a transport cofactor concentration gradient across the nuclear envelope. The chain is Nucleoporin nup132 (nup132) from Schizosaccharomyces pombe (strain 972 / ATCC 24843) (Fission yeast).